A 161-amino-acid chain; its full sequence is Putative 4-hydroxy-4-methyl-2-oxoglutarate aldolase (161 aa).

Residues 75-78 (GDNL) and R97 contribute to the substrate site. Residue D98 coordinates a divalent metal cation.

This sequence belongs to the class II aldolase/RraA-like family. In terms of assembly, homotrimer. A divalent metal cation is required as a cofactor.

It catalyses the reaction 4-hydroxy-4-methyl-2-oxoglutarate = 2 pyruvate. It carries out the reaction oxaloacetate + H(+) = pyruvate + CO2. Its function is as follows. Catalyzes the aldol cleavage of 4-hydroxy-4-methyl-2-oxoglutarate (HMG) into 2 molecules of pyruvate. Also contains a secondary oxaloacetate (OAA) decarboxylase activity due to the common pyruvate enolate transition state formed following C-C bond cleavage in the retro-aldol and decarboxylation reactions. In Alkalilimnicola ehrlichii (strain ATCC BAA-1101 / DSM 17681 / MLHE-1), this protein is Putative 4-hydroxy-4-methyl-2-oxoglutarate aldolase.